The chain runs to 154 residues: Ribonuclease H (154 aa).

The region spanning 7–148 (KPETVEIYTD…ADALAREGIA (142 aa)) is the RNase H type-1 domain. Residues D16, E54, D76, and D140 each coordinate Mg(2+).

The protein belongs to the RNase H family. In terms of assembly, monomer. Mg(2+) serves as cofactor.

Its subcellular location is the cytoplasm. The enzyme catalyses Endonucleolytic cleavage to 5'-phosphomonoester.. Endonuclease that specifically degrades the RNA of RNA-DNA hybrids. This is Ribonuclease H from Paramagnetospirillum magneticum (strain ATCC 700264 / AMB-1) (Magnetospirillum magneticum).